The primary structure comprises 948 residues: Protocadherin alpha-10 (948 aa).

An N-terminal signal peptide occupies residues 1-28 (MVSRCSCLGVQCLLLSLLLLAAWEVGSG). Cadherin domains are found at residues 29–132 (QLHY…PPRF), 133–241 (SVTE…APIF), 242–349 (DRPV…SPEV), 350–454 (IVTS…APAF), 455–564 (AQPE…APAL), and 587–689 (GHVV…APEV). The Extracellular segment spans residues 29–695 (QLHYSVYEEA…APEVALVDVN (667 aa)). N-linked (GlcNAc...) asparagine glycans are attached at residues Asn-256 and Asn-264. N-linked (GlcNAc...) asparagine glycosylation occurs at Asn-547. The helical transmembrane segment at 696–716 (VYLIIAICAVSSLLVLTLLLY) threads the bilayer. The Cytoplasmic segment spans residues 717–948 (TALRCSAAPT…GNSTTDNSDQ (232 aa)). PXXP repeat units follow at residues 732–735 (PVKP), 772–775 (PSLP), 797–800 (PRQP), 830–833 (PGGP), 871–874 (PGNP), and 889–892 (PGSP). Residues 732–892 (PVKPTLVCSS…PDKFIIPGSP (161 aa)) form a 6 X 4 AA repeats of P-X-X-P region. Disordered regions lie at residues 783-804 (DGED…NPDW) and 827-948 (RAGP…NSDQ). Positions 907–921 (DKSDFITFGKKEETK) are enriched in basic and acidic residues.

It localises to the cell membrane. Its function is as follows. Potential calcium-dependent cell-adhesion protein. May be involved in the establishment and maintenance of specific neuronal connections in the brain. The sequence is that of Protocadherin alpha-10 (PCDHA10) from Pan troglodytes (Chimpanzee).